The sequence spans 557 residues: MAAQGFLLIATFLLVLMVLARPLGSGLARLINDIPLPGTAGVERVLFRLPGVSDSEMNWKQYLCAILGLNMLGLAVLFFMLLGQHYLPLNPQQLPGLSWDLALNTAVSFVTNTNWQSYSGETTLSYFSQMAGLTVQNFLSAASGIAVIFALIRAFTRQSMSTLGNAWVDLLRITLWVLAPVALLIALFFIQQGALQNFLPYQAVTTIEGSQQLLPMGPVASQEAIKMLGTNGGGFFNANSSHPFENPTALTNFVQMLAIFLIPTALCFAFGEVAGDRRQGRMLLWAMSVIFVICVGVVMWAEVQGNPHLLALGADSSINMEGKESRFGVLVSSLFAVVTTAASCGAVIAMHDSFTALGGMVPMWLMQIGEVVFGGVGSGLYGMMLFVLLAVFIAGLMIGRTPEYLGKKIDVREMKLTALAILVTPTLVLMGAALAMMTDAERSAMLNPGPHGFSEVLYAVSSAANNNGSAFAGLSANSPFWNCLLALCMFVGRFGVIIPVMAIAGSLVSKKSQPASSGTLPTHGPLFVGLLIGTVLLVGALTFIPALALGPVAEYLS.

The next 12 helical transmembrane spans lie at 5 to 25 (GFLL…PLGS), 63 to 83 (LCAI…MLLG), 132 to 152 (GLTV…FALI), 170 to 190 (LLRI…LFFI), 253 to 273 (FVQM…FGEV), 283 to 303 (LLWA…WAEV), 329 to 349 (VLVS…AVIA), 356 to 376 (ALGG…FGGV), 379 to 399 (GLYG…LMIG), 416 to 436 (LTAL…ALAM), 484 to 504 (LLAL…MAIA), and 526 to 546 (LFVG…FIPA).

Belongs to the KdpA family. The system is composed of three essential subunits: KdpA, KdpB and KdpC.

The protein resides in the cell inner membrane. In terms of biological role, part of the high-affinity ATP-driven potassium transport (or Kdp) system, which catalyzes the hydrolysis of ATP coupled with the electrogenic transport of potassium into the cytoplasm. This subunit binds the periplasmic potassium ions and delivers the ions to the membrane domain of KdpB through an intramembrane tunnel. The chain is Potassium-transporting ATPase potassium-binding subunit from Escherichia coli O81 (strain ED1a).